A 537-amino-acid chain; its full sequence is MRSEVPSSTSPSFLSPPFIHLPLLSLSSPTPLPHSSSSTFSLFSTMAASQIGLVGLAVMGQNLALNIAEKGFPISVYNRTASKVDETLDRAKSEGDLPLSGHYTPRDFVLSIERPRSIVILVKAGSPVDQTIASLASFMEPGDTIIDGGNEWYQNTERRLSDAHSNGLLYLGMGVSGGEEGARFGPSLMPGGDFQAYDNIQHILKKVAAQVDDGPCVTYIGEGGSGNFVKMVHNGIEYGDMQLISEAYDVLKNVGGLSNEELGQIFDEWNKSELESFLVEITADIFKVKDDLADGGLVDKILDKTGMKGTGKWTVQQAAELSVAAPTIAASLDCRYLSGLKEERENAAKILEAAGMKEEVNAIRGGVDKKRLIDDVRQALYASKICSYAQGMNLLRAKSAEMGWDLNLGELARIWKGGCIIRAVFLDSIKQAYQRNPNLASLVVDPEFAKEMVQRQAAWRRVVGLAVSAGISTPGMCASLAYFDTYRRARLPANLVQAQRDYFGAHTYERVDLPGSYHTEWSKLARKSDPNVAAALH.

The N-terminal 44 residues, 1–44 (MRSEVPSSTSPSFLSPPFIHLPLLSLSSPTPLPHSSSSTFSLFS), are a transit peptide targeting the chloroplast. NADP(+) contacts are provided by residues 55-60 (GLAVMG), 78-80 (NRT), 122-124 (VKA), and Asn-150. Residues Asn-150 and 176-178 (SGG) contribute to the substrate site. Residue Lys-230 is the Proton acceptor of the active site. A substrate-binding site is contributed by 233–234 (HN). Glu-237 (proton donor) is an active-site residue. Substrate contacts are provided by Tyr-238, Lys-308, Arg-335, Arg-500, and His-506.

This sequence belongs to the 6-phosphogluconate dehydrogenase family. As to quaternary structure, homodimer.

The protein localises to the plastid. Its subcellular location is the chloroplast. The enzyme catalyses 6-phospho-D-gluconate + NADP(+) = D-ribulose 5-phosphate + CO2 + NADPH. Its pathway is carbohydrate degradation; pentose phosphate pathway; D-ribulose 5-phosphate from D-glucose 6-phosphate (oxidative stage): step 3/3. Catalyzes the oxidative decarboxylation of 6-phosphogluconate to ribulose 5-phosphate and CO(2), with concomitant reduction of NADP to NADPH. The protein is 6-phosphogluconate dehydrogenase, decarboxylating 2, chloroplastic of Spinacia oleracea (Spinach).